The sequence spans 267 residues: Hydroxyethylthiazole kinase 2 (267 aa).

M41 is a binding site for substrate. ATP contacts are provided by K116 and T166. G193 is a binding site for substrate.

This sequence belongs to the Thz kinase family. Mg(2+) serves as cofactor.

It catalyses the reaction 5-(2-hydroxyethyl)-4-methylthiazole + ATP = 4-methyl-5-(2-phosphooxyethyl)-thiazole + ADP + H(+). It functions in the pathway cofactor biosynthesis; thiamine diphosphate biosynthesis; 4-methyl-5-(2-phosphoethyl)-thiazole from 5-(2-hydroxyethyl)-4-methylthiazole: step 1/1. Its function is as follows. Catalyzes the phosphorylation of the hydroxyl group of 4-methyl-5-beta-hydroxyethylthiazole (THZ). This Streptococcus pneumoniae (strain 70585) protein is Hydroxyethylthiazole kinase 2.